The primary structure comprises 1128 residues: MAAVRTASLLCGLLALLALCPEGSPQTVLTDDEIQEFLEGFLSEFETQSPPREDDVEAQPLPEPTQRARKSKAGGKPRADAEAPPEKNKDKEKKGKKDKGPKAAKHLEGSTRPTKKPKEKPPKATKKPKEKPPKATKKPKEKPPKATKKPKEKPPKATKRPSAGKRFSTVAPLETPERSLTSPSNPGTRELPEERGRTSLNTWQGQGEETQVEARQHRPEPEEETEMPTLDYNDQIEREDYEDFEYIRRQKQPRPTPSRKRIWPEPPEEKTQEPEERKEVDPPLKPLLPPDYGDGYLIPNYDDLDYYFPHPPPQKPDVGQEVDEEKEELKKPKKEGSSPKEDTEDKWAAEKNKDHKAGPRKGEELEEEWGPVEKIKCPPIGMESHRIEDNQIRASSMLRHGLGAQRGRLNMQAGANEDDYYDGAWCAEDESQTQWIEVDTRRTTRFTGVITQGRDSSIHDDFVTTFFVGFSNDSQTWVMYTNGYEEMTFHGNVDKDTPVLSELPEPVVARFIRIYPLTWNGSLCMRLEVLGCPVTPVYSYYAQNEVVTTDSLDFRHHSYKDMRQLMKVVNEECPTITRTYSLGKSSRGLKIYAMEISDNPGEHELGEPEFRYTAGMHGNEVLGRELLLLLMQYLCHEYRDGNPRVRNLVQDTRIHLVPSLNPDGYEVAAQMGSEFGNWALGLWTEEGFDIFEDFPDLNSVLWAAEEKKWVPYRVPNNNLPIPERYLSPDATVSTEVRAIISWMEKNPFVLGANLNGGERLVSYPYDMARTPSQEQLLAAALAAARGEDEDEVSEAQETPDHAIFRWLAISFASAHLTMTEPYRGGCQAQDYTSGMGIVNGAKWNPRSGTFNDFSYLHTNCLELSIYLGCDKFPHESELPREWENNKEALLTFMEQVHRGIKGVVTDEQGIPIANATISVSGINHGVKTASGGDYWRILNPGEYRVTAHAEGYTSSAKICNVDYDIGATQCNFILARSNWKRIREILAMNGNRPILRVDPSRPMTPQQRRLQQRRLRYRLRMREQMRLRRLNSTTGPATSPTPALTLPPSPTPGSTSRLWEILPTTAAGWEESETETYTEVVTEFETEYGPDLEVEELEEEEEEEEEMDTGLTFPVTTVETYTVNFGDF.

The N-terminal stretch at 1–25 is a signal peptide; that stretch reads MAAVRTASLLCGLLALLALCPEGSP. The tract at residues 40 to 368 is disordered; the sequence is GFLSEFETQS…PRKGEELEEE (329 aa). Residues 77-109 show a composition bias toward basic and acidic residues; it reads PRADAEAPPEKNKDKEKKGKKDKGPKAAKHLEG. Residues 113 to 163 show a composition bias toward basic residues; sequence PTKKPKEKPPKATKKPKEKPPKATKKPKEKPPKATKKPKEKPPKATKRPSA. Composition is skewed to polar residues over residues 178-187 and 198-209; these read RSLTSPSNPG and TSLNTWQGQGEE. Over residues 249 to 261 the composition is skewed to basic residues; sequence RQKQPRPTPSRKR. Composition is skewed to basic and acidic residues over residues 267–282 and 327–363; these read PEEKTQEPEERKEVDP and EELKKPKKEGSSPKEDTEDKWAAEKNKDHKAGPRKGE. The F5/8 type C domain maps to 375-532; it reads IKCPPIGMES…LCMRLEVLGC (158 aa). The interval 382-547 is required for DNA-binding and interaction with NFKBIA; sequence MESHRIEDNQ…YSYYAQNEVV (166 aa). Interaction with MAPK1 and MAPK3 regions lie at residues 413-616 and 998-1128; these read AGAN…TAGM and DPSR…FGDF. Residue Asn520 is glycosylated (N-linked (GlcNAc...) asparagine). The segment at 547–977 is interaction with PTEN; the sequence is VTTDSLDFRH…TQCNFILARS (431 aa). The Peptidase M14 domain maps to 555–896; it reads RHHSYKDMRQ…EALLTFMEQV (342 aa). Positions 933–1128 are required for transcriptional repression; that stretch reads DYWRILNPGE…ETYTVNFGDF (196 aa). Residues 1027 to 1056 are disordered; that stretch reads LRRLNSTTGPATSPTPALTLPPSPTPGSTS. Over residues 1030–1044 the composition is skewed to low complexity; it reads LNSTTGPATSPTPAL.

The protein belongs to the peptidase M14 family. In terms of assembly, interacts with different types of collagen, including collagens I, III, and V. Interacts with GNG5, NFKBIA, MAPK1, MAPK3 and PTEN. May interact with calmodulin. Interaction with MAPK1 may stimulate DNA-binding. Binds to DNA in vitro. Post-translationally, phosphorylated by MAPK1 in vitro. In terms of tissue distribution, expressed in aorta.

The protein resides in the secreted. In terms of biological role, as a positive regulator of collagen fibrillogenesis, it is probably involved in the organization and remodeling of the extracellular matrix. May positively regulate MAP-kinase activity in adipocytes, leading to enhanced adipocyte proliferation and reduced adipocyte differentiation. May also positively regulate NF-kappa-B activity in macrophages by promoting the phosphorylation and subsequent degradation of I-kappa-B-alpha (NFKBIA), leading to enhanced macrophage inflammatory responsiveness. Can act as a transcriptional repressor. This chain is Adipocyte enhancer-binding protein 1 (Aebp1), found in Rattus norvegicus (Rat).